We begin with the raw amino-acid sequence, 350 residues long: D-guloside 3-dehydrogenase (350 aa).

This sequence belongs to the zinc-containing alcohol dehydrogenase family. The cofactor is Zn(2+).

It catalyses the reaction a D-guloside + NAD(+) = a 3-dehydro-D-guloside + NADH + H(+). In terms of biological role, catalyzes the NAD(+)-dependent oxidation of the hydroxyl group at C3 of D-gulosides leading to 3-dehydro-D-gulosides. Probably functions in a metabolic pathway that transforms D-gulosides to D-glucosides. Is also able to catalyze the reverse reactions, i.e. the NADH-dependent reduction of the oxo group at C3 of 3-dehydro-D-gulosides leading to D-gulosides. In vitro, can oxidize D-gulose and methyl beta-D-guloside, and reduce methyl alpha-3-dehydro-D-guloside and methyl beta-3-dehydro-D-guloside. However, the actual specific physiological substrates for this metabolic pathway are unknown. This chain is D-guloside 3-dehydrogenase (ycjQ), found in Escherichia coli (strain K12).